A 216-amino-acid chain; its full sequence is Small ribosomal subunit protein uS3c (216 aa).

One can recognise a KH type-2 domain in the interval 43-116 (IKNYVQKNMR…RLNIAITRVA (74 aa)).

Belongs to the universal ribosomal protein uS3 family. Part of the 30S ribosomal subunit.

It localises to the plastid. Its subcellular location is the chloroplast. The protein is Small ribosomal subunit protein uS3c (rps3) of Drimys granadensis.